Reading from the N-terminus, the 92-residue chain is Large ribosomal subunit protein bL34m (92 aa).

Residues 1 to 46 (MAVLAGSLLGPTSRSAALLGGRWLQPRAWLGFPDAWGLPTPQQARG) constitute a mitochondrion transit peptide. Phosphoserine is present on Ser-71.

Belongs to the bacterial ribosomal protein bL34 family. As to quaternary structure, component of the mitochondrial large ribosomal subunit (mt-LSU). Mature mammalian 55S mitochondrial ribosomes consist of a small (28S) and a large (39S) subunit. The 28S small subunit contains a 12S ribosomal RNA (12S mt-rRNA) and 30 different proteins. The 39S large subunit contains a 16S rRNA (16S mt-rRNA), a copy of mitochondrial valine transfer RNA (mt-tRNA(Val)), which plays an integral structural role, and 52 different proteins.

The protein resides in the mitochondrion. The sequence is that of Large ribosomal subunit protein bL34m (MRPL34) from Homo sapiens (Human).